We begin with the raw amino-acid sequence, 68 residues long: Sec-independent protein translocase protein TatA (68 aa).

Residues Met1–Gly21 form a helical membrane-spanning segment. The interval Ala48–Arg68 is disordered. Basic and acidic residues predominate over residues Lys53 to Arg68.

It belongs to the TatA/E family. In terms of assembly, the Tat system comprises two distinct complexes: a TatABC complex, containing multiple copies of TatA, TatB and TatC subunits, and a separate TatA complex, containing only TatA subunits. Substrates initially bind to the TatABC complex, which probably triggers association of the separate TatA complex to form the active translocon.

It is found in the cell inner membrane. Part of the twin-arginine translocation (Tat) system that transports large folded proteins containing a characteristic twin-arginine motif in their signal peptide across membranes. TatA could form the protein-conducting channel of the Tat system. This chain is Sec-independent protein translocase protein TatA, found in Sinorhizobium medicae (strain WSM419) (Ensifer medicae).